We begin with the raw amino-acid sequence, 923 residues long: Isoleucine--tRNA ligase (923 aa).

Positions 57 to 67 match the 'HIGH' region motif; that stretch reads PYANGHIHIGH. Glu560 serves as a coordination point for L-isoleucyl-5'-AMP. Positions 601–605 match the 'KMSKS' region motif; that stretch reads KMSKS. Position 604 (Lys604) interacts with ATP. Zn(2+) contacts are provided by Cys895, Cys898, Cys915, and Cys918.

It belongs to the class-I aminoacyl-tRNA synthetase family. IleS type 1 subfamily. Monomer. Zn(2+) is required as a cofactor.

The protein resides in the cytoplasm. It catalyses the reaction tRNA(Ile) + L-isoleucine + ATP = L-isoleucyl-tRNA(Ile) + AMP + diphosphate. Functionally, catalyzes the attachment of isoleucine to tRNA(Ile). As IleRS can inadvertently accommodate and process structurally similar amino acids such as valine, to avoid such errors it has two additional distinct tRNA(Ile)-dependent editing activities. One activity is designated as 'pretransfer' editing and involves the hydrolysis of activated Val-AMP. The other activity is designated 'posttransfer' editing and involves deacylation of mischarged Val-tRNA(Ile). This chain is Isoleucine--tRNA ligase, found in Geobacter sulfurreducens (strain ATCC 51573 / DSM 12127 / PCA).